The following is a 108-amino-acid chain: X antigen family member 5 (108 aa).

The disordered stretch occupies residues 20–108 (VGPMLEPSVP…PEGGEGKPQL (89 aa)). Composition is skewed to basic and acidic residues over residues 40–52 (SQDHTPGQKREDD) and 94–108 (EQFKMPEGGEGKPQL).

It belongs to the GAGE family.

This chain is X antigen family member 5 (XAGE5), found in Homo sapiens (Human).